Reading from the N-terminus, the 396-residue chain is Capsular polysaccharide biosynthesis protein CapF (396 aa).

The next 12 membrane-spanning stretches (helical) occupy residues 7 to 27 (YMFV…LVIV), 41 to 61 (ALVI…SVIV), 74 to 94 (AILS…YVLG), 101 to 121 (ILIV…YGIY), 129 to 149 (LLGI…YIIY), 153 to 173 (HNLN…FAII), 198 to 218 (IFIL…NTGI), 232 to 252 (LGIF…ANSI), 279 to 299 (MVFI…FLGE), 315 to 335 (IILI…FLGT), 351 to 371 (LILL…YSLL), and 372 to 392 (GAAL…YYFY).

It belongs to the polysaccharide synthase family.

Its subcellular location is the cell membrane. It functions in the pathway capsule biogenesis; capsule polysaccharide biosynthesis. Functionally, required for the biosynthesis of type 1 capsular polysaccharide. This is Capsular polysaccharide biosynthesis protein CapF (capF) from Staphylococcus aureus.